The sequence spans 904 residues: Eukaryotic translation initiation factor 3 subunit C (904 aa).

Disordered stretches follow at residues 1-38 and 156-290; these read MSRF…EEED and FRES…TSEK. The segment covering 22-32 has biased composition (polar residues); it reads IQRQTAPQFTF. Residues 161 to 183 show a composition bias toward acidic residues; that stretch reads DAADDEDEEEEKKEEEESDDEEA. Positions 194–206 are enriched in basic and acidic residues; the sequence is FKKDTVEKVKVEK. Positions 207 to 232 are enriched in acidic residues; it reads DDDDSDDSIDWGQDSDSDESSSEEEA. Residues 237 to 247 are compositionally biased toward basic and acidic residues; that stretch reads IRERFLKRPEK. Residues 257 to 272 are compositionally biased toward basic residues; it reads KEKKKTKETKDSRKKK. Positions 636–812 constitute a PCI domain; it reads FHMHINLELL…ETVVLHRSEP (177 aa). The disordered stretch occupies residues 847-904; the sequence is RGGNQGYNRDRQNYRNQNQNRENWNNNRRQDRGNRNRNQNRDREQREQHRVEFEEKAE. The segment covering 860-873 has biased composition (low complexity); that stretch reads YRNQNQNRENWNNN. Residues 874–904 show a composition bias toward basic and acidic residues; that stretch reads RRQDRGNRNRNQNRDREQREQHRVEFEEKAE.

It belongs to the eIF-3 subunit C family. As to quaternary structure, component of the eukaryotic translation initiation factor 3 (eIF-3) complex.

Its subcellular location is the cytoplasm. Component of the eukaryotic translation initiation factor 3 (eIF-3) complex, which is involved in protein synthesis of a specialized repertoire of mRNAs and, together with other initiation factors, stimulates binding of mRNA and methionyl-tRNAi to the 40S ribosome. The eIF-3 complex specifically targets and initiates translation of a subset of mRNAs involved in cell proliferation. The polypeptide is Eukaryotic translation initiation factor 3 subunit C (Culex quinquefasciatus (Southern house mosquito)).